The sequence spans 682 residues: DNA-directed RNA polymerase subunit beta' (682 aa).

Zn(2+)-binding residues include cysteine 69, cysteine 71, cysteine 87, and cysteine 90. Residues aspartate 489, aspartate 491, and aspartate 493 each coordinate Mg(2+).

This sequence belongs to the RNA polymerase beta' chain family. RpoC1 subfamily. As to quaternary structure, in plastids the minimal PEP RNA polymerase catalytic core is composed of four subunits: alpha, beta, beta', and beta''. When a (nuclear-encoded) sigma factor is associated with the core the holoenzyme is formed, which can initiate transcription. It depends on Mg(2+) as a cofactor. Zn(2+) serves as cofactor.

It is found in the plastid. The protein resides in the chloroplast. The enzyme catalyses RNA(n) + a ribonucleoside 5'-triphosphate = RNA(n+1) + diphosphate. Functionally, DNA-dependent RNA polymerase catalyzes the transcription of DNA into RNA using the four ribonucleoside triphosphates as substrates. This is DNA-directed RNA polymerase subunit beta' from Vitis vinifera (Grape).